The sequence spans 941 residues: Protein BREAST CANCER SUSCEPTIBILITY 1 homolog (941 aa).

The RING-type zinc-finger motif lies at 16-54; it reads CPICLSLYNSAVSLSCNHVFCNACIVKSMKMDATCPVCK. 2 disordered regions span residues 87–282 and 303–528; these read FVSQ…ILPS and KVKV…GKDD. 2 stretches are compositionally biased toward basic and acidic residues: residues 96–115 and 125–136; these read SDKE…DKNR and KRNEYGKTKEID. Polar residues predominate over residues 157-173; sequence LLQNLSAESLTKPTESV. Residues 175 to 196 are compositionally biased toward basic and acidic residues; that stretch reads TAEKPKDYTENTVIRLDEHPSL. Residues 216-236 are compositionally biased toward polar residues; it reads NSSQRTESDQLLGTTPVNVPS. Over residues 242 to 255 the composition is skewed to basic and acidic residues; sequence DSDHESPSKEDEQQ. Residues 298 to 305 carry the Nuclear localization signal 1 motif; that stretch reads QKKLPKVK. 2 stretches are compositionally biased toward polar residues: residues 329-357 and 376-391; these read GVSQ…SGTI and SKAQ…NVSN. Composition is skewed to basic and acidic residues over residues 428-453 and 477-487; these read GKGD…EKPS and KTSEKKLKLDS. A Nuclear localization signal 2 motif is present at residues 444-451; that stretch reads EKRSPTEK. Positions 489–498 are enriched in polar residues; sequence MISSKATQPH. Residues 512 to 528 show a composition bias toward basic and acidic residues; the sequence is DKQDSRNNRKSTVGKDD. The C2HC pre-PHD-type zinc finger occupies 561-612; it reads KFTCAFCQCSEDTEASGEMTHYYRGEPVSADFNGGSKVIHVHKNCAEWAPNV. Residues 632–681 form a PHD-type; degenerate zinc finger; sequence ISCSCCGLKGAALGCYNKSCKNSFHVTCAKLIPECRWDNVKFVMLCPLDA. BRCT domains follow at residues 724-819 and 840-941; these read KQFH…PYEI and KKPK…LVLI.

Forms heterodimer with BARD1/ROW1. As to expression, expressed ubiquitously with highest levels in flower buds. Mostly expressed in flowers and siliques, and, to a lower extent, in roots, rosette leaves, inflorescence and young cauline leaves.

It is found in the nucleus. Plays a role in DNA repair and in cell-cycle control. Required for the repair of DNA double-strand breaks (DSBs), both natural and induced by genotoxic stress, by homologous recombination (HR). This is Protein BREAST CANCER SUSCEPTIBILITY 1 homolog from Arabidopsis thaliana (Mouse-ear cress).